A 313-amino-acid polypeptide reads, in one-letter code: uncharacterized protein (313 aa).

9 helical membrane passes run A31–F53, L62–Y84, V104–S126, F147–V161, S166–L185, R198–F220, S225–I244, F264–F282, and P286–I308.

The protein resides in the cell membrane. This is an uncharacterized protein from Archaeoglobus fulgidus (strain ATCC 49558 / DSM 4304 / JCM 9628 / NBRC 100126 / VC-16).